A 373-amino-acid polypeptide reads, in one-letter code: Citrate synthase (373 aa).

Active-site residues include His-262 and Asp-314.

Belongs to the citrate synthase family. As to quaternary structure, homohexamer.

The enzyme catalyses oxaloacetate + acetyl-CoA + H2O = citrate + CoA + H(+). It participates in carbohydrate metabolism; tricarboxylic acid cycle; isocitrate from oxaloacetate: step 1/2. The chain is Citrate synthase (ctsA) from Heyndrickxia coagulans (Weizmannia coagulans).